A 595-amino-acid chain; its full sequence is E3 ubiquitin-protein ligase synoviolin B (595 aa).

A helical transmembrane segment spans residues 1–19 (MTGASLALTASVVAHAYYL). The Lumenal segment spans residues 20–35 (KNQFYPTVVYLTKSSP). The helical transmembrane segment at 36–56 (SMAILYIQAFVLVFLLGKFMG) threads the bilayer. At 57 to 92 (KVFFGQLRAAEMEHLLERSWYAVTETCLAFTVFRDD) the chain is on the cytoplasmic side. A helical membrane pass occupies residues 93-113 (FSPRFVALFTLLLFLKCFHWL). Topologically, residues 114–129 (AEDRVDFMERSPNISW) are lumenal. The helical transmembrane segment at 130–150 (LFHFRILALMLLLGVLDAFFV) threads the bilayer. Residues 151–163 (SHAYNSLVTRGAS) are Cytoplasmic-facing. Residues 164–184 (VQLVFGFEYAILMTMILAVFI) form a helical membrane-spanning segment. At 185–218 (KYILHSVDLQSENPWDNKAVYMLYTELFTGFIKV) the chain is on the lumenal side. The chain crosses the membrane as a helical span at residues 219–239 (LLYMAFMTIMVKVHTFPLFAI). An interaction with p53/TP53 region spans residues 230-264 (KVHTFPLFAIRPMYLAMRQFKKAVTDAVMSRRAIR). Over 240-595 (RPMYLAMRQF…LQKLETTDSQ (356 aa)) the chain is Cytoplasmic. 8 residues coordinate Zn(2+): Cys-285, Cys-288, Cys-301, His-303, His-306, Cys-309, Cys-320, and Cys-323. The segment at 285 to 324 (CIICREEMVSGAKRLPCNHIFHTSCLRSWFQRQQTCPTCR) adopts an RING-type; atypical zinc-finger fold. Low complexity predominate over residues 335–353 (QPQTPAEQQNQHQAQQQPT). 2 disordered regions span residues 335–370 (QPQT…LPPF) and 386–426 (PVPG…PGAA). The segment covering 354–370 (PVVPPQPNFPPGMLPPF) has biased composition (pro residues). A compositionally biased stretch (low complexity) spans 390 to 408 (APVGNPPDEANPGSSSGSS). The stretch at 463 to 494 (EELRAMEGHERQNLEARLQCLQNIHTLLDAAM) forms a coiled coil. The segment at 509–595 (PPQPPVSSSS…LQKLETTDSQ (87 aa)) is disordered. A compositionally biased stretch (low complexity) spans 514-552 (VSSSSSSSASASTEPTTSSVSEPVIDTSSIVTTDSSQQS).

The protein belongs to the HRD1 family. Homodimer.

The protein localises to the endoplasmic reticulum membrane. It catalyses the reaction S-ubiquitinyl-[E2 ubiquitin-conjugating enzyme]-L-cysteine + [acceptor protein]-L-lysine = [E2 ubiquitin-conjugating enzyme]-L-cysteine + N(6)-ubiquitinyl-[acceptor protein]-L-lysine.. Its pathway is protein modification; protein ubiquitination. In terms of biological role, E3 ubiquitin-protein ligase which accepts ubiquitin specifically from endoplasmic reticulum-associated UBC7 E2 ligase and transfers it to substrates, promoting their degradation. Component of the endoplasmic reticulum quality control (ERQC) system also called ER-associated degradation (ERAD) involved in ubiquitin-dependent degradation of misfolded endoplasmic reticulum proteins. Also promotes the degradation of normal but naturally short-lived proteins. Protects cells from ER stress-induced apoptosis. Sequesters p53 in the cytoplasm and promotes its degradation, thereby negatively regulating its biological function in transcription, cell cycle regulation and apoptosis. This Xenopus laevis (African clawed frog) protein is E3 ubiquitin-protein ligase synoviolin B (syvn1-b).